The chain runs to 75 residues: Conotoxin Vc6.15 (75 aa).

A signal peptide spans 1-19 (MEKLTILLHVAAVLMSTQA). Residues 20-41 (LIQEQRQKAKINLFSKRKPSAE) constitute a propeptide that is removed on maturation. 3 disulfide bridges follow: cysteine 49/cysteine 62, cysteine 55/cysteine 66, and cysteine 61/cysteine 71.

Belongs to the conotoxin O2 superfamily. In terms of tissue distribution, expressed by the venom duct.

It localises to the secreted. In terms of biological role, inhibits voltage-gated ion channels. The protein is Conotoxin Vc6.15 of Conus victoriae (Queen Victoria cone).